The chain runs to 432 residues: Septin-11 (432 aa).

An N-acetylalanine modification is found at Ala2. A Phosphoserine modification is found at Ser9. Residues 38–304 (QGFCFNILCV…ELYRRCKLEE (267 aa)) enclose the Septin-type G domain. The interval 48 to 55 (GETGIGKS) is G1 motif. GTP-binding positions include 48 to 55 (GETGIGKS), Gly103, 184 to 192 (KADTIAKNE), Gly238, and Arg253. The segment at 100–103 (DTVG) is G3 motif. A G4 motif region spans residues 183-186 (AKAD). A coiled-coil region spans residues 320-413 (QETYEAKRNE…LLQSQAQQSG (94 aa)). Residues 403–416 (QLLQSQAQQSGAQQ) are compositionally biased toward low complexity. The tract at residues 403–432 (QLLQSQAQQSGAQQTKKDKDKKNSPWLCTE) is disordered.

It belongs to the TRAFAC class TrmE-Era-EngA-EngB-Septin-like GTPase superfamily. Septin GTPase family. Septins polymerize into heterooligomeric protein complexes that form filaments, and can associate with cellular membranes, actin filaments and microtubules. Forms homooligomers. GTPase activity is required for filament formation. Interacts with SEPTIN7, SEPTIN9 and SEPTIN12.

Its subcellular location is the cytoplasm. It localises to the cytoskeleton. The protein resides in the synapse. It is found in the cell projection. The protein localises to the dendritic spine. Its subcellular location is the axon. Its function is as follows. Filament-forming cytoskeletal GTPase. May play a role in cytokinesis (Potential). May play a role in the cytoarchitecture of neurons, including dendritic arborization and dendritic spines, and in GABAergic synaptic connectivity. This is Septin-11 from Macaca fascicularis (Crab-eating macaque).